A 237-amino-acid polypeptide reads, in one-letter code: Splicing factor U2AF 35 kDa subunit (237 aa).

Residue A2 is modified to N-acetylalanine. The segment at 12–40 (EKDKVNCSFYFKIGACRHGDRCSRLHNKP) adopts a C3H1-type 1 zinc-finger fold. At K39 the chain carries N6-methyllysine. A phosphoserine mark is found at S61 and S145. The 83-residue stretch at 65–147 (LRCAVSDVEM…QPIHAELSPV (83 aa)) folds into the RRM domain. The C3H1-type 2 zinc finger occupies 149-176 (DFREACCRQYEMGECTRGGFCNFMHLKP). At R165 the chain carries Omega-N-methylarginine. The tract at residues 185–237 (LYGRRRKKHRSRSRSRERRSRSRDRGRGGGGGGGGGRERDRRRSRDRERSGRF) is disordered. Over residues 188-208 (RRRKKHRSRSRSRERRSRSRD) the composition is skewed to basic residues. Residues 220–237 (GRERDRRRSRDRERSGRF) show a composition bias toward basic and acidic residues.

Belongs to the splicing factor SR family. In terms of assembly, identified in the spliceosome C complex. Heterodimer with U2AF2. Interacts (via RS domain) with PHF5A (via N-terminus). Interacts with ZRANB2. Interacts with SDE2. Interacts with SF3B1.

The protein resides in the nucleus. The protein localises to the nucleus speckle. Functionally, plays a critical role in both constitutive and enhancer-dependent splicing by mediating protein-protein interactions and protein-RNA interactions required for accurate 3'-splice site selection. Recruits U2 snRNP to the branch point. Directly mediates interactions between U2AF2 and proteins bound to the enhancers and thus may function as a bridge between U2AF2 and the enhancer complex to recruit it to the adjacent intron. This chain is Splicing factor U2AF 35 kDa subunit (U2AF1), found in Bos taurus (Bovine).